We begin with the raw amino-acid sequence, 316 residues long: Arabinooligosaccharides transport system permease protein AraP (316 aa).

Transmembrane regions (helical) follow at residues 32-52 (VVPY…SFYP), 94-114 (TYMI…AVLL), 128-148 (ALFL…RLMF), 178-198 (MFLM…LYFL), 224-244 (FYVT…ISVI), 254-274 (FVFW…GYLY), and 283-303 (MGFG…ISIT). The ABC transmembrane type-1 domain occupies 89 to 304 (LQNTTTYMIL…LIIFVISITQ (216 aa)).

This sequence belongs to the binding-protein-dependent transport system permease family. MalFG subfamily. As to quaternary structure, the complex is composed of two ATP-binding proteins (MsmX), two transmembrane proteins (AraP and AraQ) and a solute-binding protein (AraN).

It localises to the cell membrane. Its function is as follows. Part of the ABC transporter complex AraNPQ involved in the uptake of arabinooligosaccharides. Responsible for the translocation of the substrate across the membrane. This Halalkalibacterium halodurans (strain ATCC BAA-125 / DSM 18197 / FERM 7344 / JCM 9153 / C-125) (Bacillus halodurans) protein is Arabinooligosaccharides transport system permease protein AraP (araP).